We begin with the raw amino-acid sequence, 160 residues long: RNA-binding protein 3 (160 aa).

The RRM domain maps to 6 to 84; it reads GKLFVGGLNF…RQIRVDHAGK (79 aa). Omega-N-methylarginine is present on R47. Residues 81–116 are disordered; it reads HAGKSARGSRGGAFGSYERGRGYPRGGGDQGYGSGR. Residues 103 to 114 show a composition bias toward gly residues; sequence YPRGGGDQGYGS. Asymmetric dimethylarginine; alternate is present on R105. R105 is subject to Dimethylated arginine; alternate. Position 105 is an omega-N-methylarginine; alternate (R105). Residues R120 and R134 each carry the omega-N-methylarginine modification. A disordered region spans residues 135–160; that stretch reads SRDYGGRSQGGYDRYSGGNYRDNYDN. S150 is modified (phosphoserine). Y158 is subject to Phosphotyrosine.

In terms of assembly, interacts with RPL4. Associates with the 60S ribosomal subunits.

The protein resides in the nucleus. It is found in the cytoplasm. The protein localises to the cell projection. It localises to the dendrite. Functionally, cold-inducible mRNA binding protein that enhances global protein synthesis at both physiological and mild hypothermic temperatures. Reduces the relative abundance of microRNAs, when overexpressed. Enhances phosphorylation of translation initiation factors and active polysome formation. This is RNA-binding protein 3 from Capra hircus (Goat).